The sequence spans 28 residues: MIRIISRANSVTSSNEVNRLVTGQIPHD.

Cotranscribed with fur, it is essential for fur translation. The fur ribosomal binding site (RBS) is occluded by the 5'-mRNA secondary structure, which is opened by uof translation. The protein is fur leader peptide (uof) of Escherichia coli (strain K12).